The following is a 205-amino-acid chain: H/ACA ribonucleoprotein complex subunit GAR1 (205 aa).

Residues 1–23 are compositionally biased toward gly residues; that stretch reads MSFRGGNRGGRGGFRGGFRGGRT. Positions 1–31 are disordered; that stretch reads MSFRGGNRGGRGGFRGGFRGGRTGSARSFQQ. Asymmetric dimethylarginine; by HMT1 is present on Arg-4. Residues 4-21 form an RGG-box 1 region; sequence RGGNRGGRGGFRGGFRGG. Arg-8 bears the Asymmetric dimethylarginine; by HMT1; alternate mark. Arg-8 carries the post-translational modification Omega-N-methylarginine; by HMT1; alternate. Arg-11 carries the post-translational modification Asymmetric dimethylarginine; by HMT1. At Arg-15 the chain carries Asymmetric dimethylarginine; by HMT1; alternate. Omega-N-methylarginine; by HMT1; alternate is present on Arg-15. At Arg-19 the chain carries Asymmetric dimethylarginine; by HMT1. Residue Lys-77 forms a Glycyl lysine isopeptide (Lys-Gly) (interchain with G-Cter in ubiquitin) linkage. The segment at 124–205 is disordered; it reads PKPKVVGPPK…SRGGFRGGRR (82 aa). A compositionally biased stretch (gly residues) spans 143–205; it reads APGGRGGASM…SRGGFRGGRR (63 aa). 3 positions are modified to asymmetric dimethylarginine; by HMT1; alternate: Arg-147, Arg-154, and Arg-158. Omega-N-methylarginine; by HMT1; alternate occurs at positions 147, 154, and 158. Residues 147–205 are RGG-box 2; the sequence is RGGASMGRGGSRGGFRGGRGGSSFRGGRGGSSFRGGSRGGSFRGGSRGGSRGGFRGGRR. Arg-162 bears the Asymmetric dimethylarginine; by HMT1 mark. Arg-165 carries the post-translational modification Asymmetric dimethylarginine; by HMT1; alternate. Residue Arg-165 is modified to Omega-N-methylarginine; by HMT1; alternate. Asymmetric dimethylarginine; by HMT1 is present on residues Arg-171 and Arg-174. Omega-N-methylarginine; by HMT1 is present on residues Arg-180 and Arg-184. Asymmetric dimethylarginine; by HMT1; alternate is present on Arg-189. Omega-N-methylarginine; by HMT1; alternate is present on Arg-189. Asymmetric dimethylarginine; by HMT1 is present on residues Arg-193, Arg-197, and Arg-201.

Belongs to the GAR1 family. In terms of assembly, component of the small nucleolar ribonucleoprotein particles containing H/ACA-type snoRNAs (H/ACA snoRNPs). The protein component of the H/ACA snoRNP contains CBF5, GAR1, NHP2 and NOP10. The complex contains a stable core composed of CBF5 and NOP10, to which GAR1 and NHP2 subsequently bind. Interacts with snoRNAs. In terms of processing, methylated by HMT1, forming asymmetric dimethylarginines (DMA) within a domain referred to as an RGG box, made up of repeated Gly-Gly dipeptides interspersed with Arg and aromatic residues.

The protein localises to the nucleus. It localises to the nucleolus. Its function is as follows. Non-catalytic component of the H/ACA small nucleolar ribonucleoprotein (H/ACA snoRNP), which catalyzes pseudouridylation of rRNA and is required for ribosome biogenesis. This involves the isomerization of uridine such that the ribose is subsequently attached to C5, instead of the normal N1. Pseudouridine ('psi') residues may serve to stabilize the conformation of rRNAs. The H/ACA snoRNP complex also mediates pseudouridylation of other types of RNAs. The H/ACA snoRNP complex mediates pseudouridylation at position 93 in U2 snRNA. Essential for growth. This Saccharomyces cerevisiae (strain ATCC 204508 / S288c) (Baker's yeast) protein is H/ACA ribonucleoprotein complex subunit GAR1.